A 315-amino-acid chain; its full sequence is Gamma-hemolysin component C (315 aa).

Positions 1 to 29 (MLKNKILATTLSVSLLAPLANPLLENAKA) are cleaved as a signal peptide.

This sequence belongs to the aerolysin family. Toxicity requires sequential binding and synergistic association of a class S and a class F component which form heterooligomeric complexes. HlgC (class S) associates with HlgB (class F) thus forming an CB toxin.

Its function is as follows. Toxin that seems to act by forming pores in the membrane of the cell. Has a hemolytic and a leucotoxic activity. This Staphylococcus aureus (strain MSSA476) protein is Gamma-hemolysin component C (hlgC).